We begin with the raw amino-acid sequence, 375 residues long: S-(hydroxymethyl)glutathione dehydrogenase (375 aa).

A Zn(2+)-binding site is contributed by Cys40. His41 provides a ligand contact to NAD(+). His62, Glu63, Cys92, Cys95, Cys98, Cys106, and Cys170 together coordinate Zn(2+). NAD(+)-binding positions include 195–200 (GLGGIG), Asp219, 293–295 (IGV), and 318–320 (TAF).

This sequence belongs to the zinc-containing alcohol dehydrogenase family. Class-III subfamily. In terms of assembly, homotetramer. Requires Zn(2+) as cofactor.

The enzyme catalyses a primary alcohol + NAD(+) = an aldehyde + NADH + H(+). The catalysed reaction is a secondary alcohol + NAD(+) = a ketone + NADH + H(+). It catalyses the reaction S-(hydroxymethyl)glutathione + NADP(+) = S-formylglutathione + NADPH + H(+). It carries out the reaction S-(hydroxymethyl)glutathione + NAD(+) = S-formylglutathione + NADH + H(+). The enzyme catalyses S-nitrosoglutathione + NADH + H(+) = S-(hydroxysulfenamide)glutathione + NAD(+). Its function is as follows. Oxidizes long-chain alcohols and, in the presence of glutathione, is able to oxidize formaldehyde. Also acts as a S-nitroso-glutathione reductase by catalyzing the NADH-dependent reduction of S-nitrosoglutathione, thereby regulating protein S-nitrosylation. In Paracoccus denitrificans, this protein is S-(hydroxymethyl)glutathione dehydrogenase (flhA).